The primary structure comprises 372 residues: Aminomethyltransferase (372 aa).

This sequence belongs to the GcvT family. As to quaternary structure, the glycine cleavage system is composed of four proteins: P, T, L and H.

The catalysed reaction is N(6)-[(R)-S(8)-aminomethyldihydrolipoyl]-L-lysyl-[protein] + (6S)-5,6,7,8-tetrahydrofolate = N(6)-[(R)-dihydrolipoyl]-L-lysyl-[protein] + (6R)-5,10-methylene-5,6,7,8-tetrahydrofolate + NH4(+). The glycine cleavage system catalyzes the degradation of glycine. The protein is Aminomethyltransferase of Burkholderia multivorans (strain ATCC 17616 / 249).